The primary structure comprises 314 residues: 4-hydroxy-3-methylbut-2-enyl diphosphate reductase (314 aa).

Residue cysteine 12 coordinates [4Fe-4S] cluster. Positions 41 and 74 each coordinate (2E)-4-hydroxy-3-methylbut-2-enyl diphosphate. Residues histidine 41 and histidine 74 each coordinate dimethylallyl diphosphate. Isopentenyl diphosphate contacts are provided by histidine 41 and histidine 74. A [4Fe-4S] cluster-binding site is contributed by cysteine 96. Histidine 124 contributes to the (2E)-4-hydroxy-3-methylbut-2-enyl diphosphate binding site. Histidine 124 provides a ligand contact to dimethylallyl diphosphate. Histidine 124 contacts isopentenyl diphosphate. The active-site Proton donor is the glutamate 126. Threonine 167 is a binding site for (2E)-4-hydroxy-3-methylbut-2-enyl diphosphate. Residue cysteine 197 participates in [4Fe-4S] cluster binding. Positions 225, 226, 227, and 269 each coordinate (2E)-4-hydroxy-3-methylbut-2-enyl diphosphate. Dimethylallyl diphosphate contacts are provided by serine 225, serine 226, asparagine 227, and serine 269. Residues serine 225, serine 226, asparagine 227, and serine 269 each coordinate isopentenyl diphosphate.

This sequence belongs to the IspH family. [4Fe-4S] cluster serves as cofactor.

The catalysed reaction is isopentenyl diphosphate + 2 oxidized [2Fe-2S]-[ferredoxin] + H2O = (2E)-4-hydroxy-3-methylbut-2-enyl diphosphate + 2 reduced [2Fe-2S]-[ferredoxin] + 2 H(+). The enzyme catalyses dimethylallyl diphosphate + 2 oxidized [2Fe-2S]-[ferredoxin] + H2O = (2E)-4-hydroxy-3-methylbut-2-enyl diphosphate + 2 reduced [2Fe-2S]-[ferredoxin] + 2 H(+). It functions in the pathway isoprenoid biosynthesis; dimethylallyl diphosphate biosynthesis; dimethylallyl diphosphate from (2E)-4-hydroxy-3-methylbutenyl diphosphate: step 1/1. It participates in isoprenoid biosynthesis; isopentenyl diphosphate biosynthesis via DXP pathway; isopentenyl diphosphate from 1-deoxy-D-xylulose 5-phosphate: step 6/6. Catalyzes the conversion of 1-hydroxy-2-methyl-2-(E)-butenyl 4-diphosphate (HMBPP) into a mixture of isopentenyl diphosphate (IPP) and dimethylallyl diphosphate (DMAPP). Acts in the terminal step of the DOXP/MEP pathway for isoprenoid precursor biosynthesis. This chain is 4-hydroxy-3-methylbut-2-enyl diphosphate reductase, found in Actinobacillus pleuropneumoniae serotype 3 (strain JL03).